The sequence spans 689 residues: Protein SDA1 homolog (689 aa).

The stretch at Lys-254–Asp-319 forms a coiled coil. 2 disordered regions span residues Glu-485–Trp-512 and Lys-606–Lys-689. Residues Ser-668–Leu-681 are compositionally biased toward basic and acidic residues.

Belongs to the SDA1 family.

Its subcellular location is the nucleus. The protein resides in the nucleolus. Required for 60S pre-ribosomal subunits export to the cytoplasm. This chain is Protein SDA1 homolog (sdad1), found in Xenopus tropicalis (Western clawed frog).